The sequence spans 309 residues: NAD kinase (309 aa).

Residue Asp-89 is the Proton acceptor of the active site. NAD(+) contacts are provided by residues 89–90 (DG), 163–164 (NE), His-174, Arg-191, Asp-193, and 204–209 (TAYALS).

This sequence belongs to the NAD kinase family. The cofactor is a divalent metal cation.

Its subcellular location is the cytoplasm. It carries out the reaction NAD(+) + ATP = ADP + NADP(+) + H(+). Its function is as follows. Involved in the regulation of the intracellular balance of NAD and NADP, and is a key enzyme in the biosynthesis of NADP. Catalyzes specifically the phosphorylation on 2'-hydroxyl of the adenosine moiety of NAD to yield NADP. The chain is NAD kinase from Shewanella sp. (strain MR-4).